Consider the following 376-residue polypeptide: Probable dual-specificity RNA methyltransferase RlmN (376 aa).

Catalysis depends on Glu-96, which acts as the Proton acceptor. The region spanning 102–346 is the Radical SAM core domain; it reads YPDRSTVCVS…CTVRVERGVE (245 aa). Cysteines 109 and 351 form a disulfide. Positions 116, 120, and 123 each coordinate [4Fe-4S] cluster. Residues 171–172, Ser-203, 226–228, and Asn-308 each bind S-adenosyl-L-methionine; these read GE and SLH. Cys-351 (S-methylcysteine intermediate) is an active-site residue.

It belongs to the radical SAM superfamily. RlmN family. It depends on [4Fe-4S] cluster as a cofactor.

Its subcellular location is the cytoplasm. The enzyme catalyses adenosine(2503) in 23S rRNA + 2 reduced [2Fe-2S]-[ferredoxin] + 2 S-adenosyl-L-methionine = 2-methyladenosine(2503) in 23S rRNA + 5'-deoxyadenosine + L-methionine + 2 oxidized [2Fe-2S]-[ferredoxin] + S-adenosyl-L-homocysteine. It catalyses the reaction adenosine(37) in tRNA + 2 reduced [2Fe-2S]-[ferredoxin] + 2 S-adenosyl-L-methionine = 2-methyladenosine(37) in tRNA + 5'-deoxyadenosine + L-methionine + 2 oxidized [2Fe-2S]-[ferredoxin] + S-adenosyl-L-homocysteine. Its function is as follows. Specifically methylates position 2 of adenine 2503 in 23S rRNA and position 2 of adenine 37 in tRNAs. The polypeptide is Probable dual-specificity RNA methyltransferase RlmN (Chloroflexus aurantiacus (strain ATCC 29366 / DSM 635 / J-10-fl)).